We begin with the raw amino-acid sequence, 102 residues long: NADH-quinone oxidoreductase subunit K (102 aa).

The next 3 helical transmembrane spans lie at 5–25 (LAHY…GIFL), 31–51 (IILL…FVAF), and 62–82 (VFVF…LAIL).

It belongs to the complex I subunit 4L family. As to quaternary structure, NDH-1 is composed of 14 different subunits. Subunits NuoA, H, J, K, L, M, N constitute the membrane sector of the complex.

Its subcellular location is the cell inner membrane. It catalyses the reaction a quinone + NADH + 5 H(+)(in) = a quinol + NAD(+) + 4 H(+)(out). NDH-1 shuttles electrons from NADH, via FMN and iron-sulfur (Fe-S) centers, to quinones in the respiratory chain. The immediate electron acceptor for the enzyme in this species is believed to be ubiquinone. Couples the redox reaction to proton translocation (for every two electrons transferred, four hydrogen ions are translocated across the cytoplasmic membrane), and thus conserves the redox energy in a proton gradient. This chain is NADH-quinone oxidoreductase subunit K, found in Bordetella petrii (strain ATCC BAA-461 / DSM 12804 / CCUG 43448).